Consider the following 239-residue polypeptide: 4-hydroxy-tetrahydrodipicolinate reductase (239 aa).

Residues 12–17 (GASGRM), 94–96 (GTT), and 118–121 (ASNF) each bind NAD(+). His-150 serves as the catalytic Proton donor/acceptor. His-151 provides a ligand contact to (S)-2,3,4,5-tetrahydrodipicolinate. The Proton donor role is filled by Lys-154. Residue 160–161 (GT) participates in (S)-2,3,4,5-tetrahydrodipicolinate binding.

It belongs to the DapB family.

It is found in the cytoplasm. It carries out the reaction (S)-2,3,4,5-tetrahydrodipicolinate + NAD(+) + H2O = (2S,4S)-4-hydroxy-2,3,4,5-tetrahydrodipicolinate + NADH + H(+). It catalyses the reaction (S)-2,3,4,5-tetrahydrodipicolinate + NADP(+) + H2O = (2S,4S)-4-hydroxy-2,3,4,5-tetrahydrodipicolinate + NADPH + H(+). The protein operates within amino-acid biosynthesis; L-lysine biosynthesis via DAP pathway; (S)-tetrahydrodipicolinate from L-aspartate: step 4/4. Functionally, catalyzes the conversion of 4-hydroxy-tetrahydrodipicolinate (HTPA) to tetrahydrodipicolinate. This Stenotrophomonas maltophilia (strain R551-3) protein is 4-hydroxy-tetrahydrodipicolinate reductase.